A 331-amino-acid chain; its full sequence is MSIATEIIGVPETLDHFQSESYSPYHFFSSEQWAKFRADTPLTLTSDEVKRLRSMGDPIDLDEVRRIYLSLSRLLSAHVESSQMLFEQRNRFLSLSDVTKTPFVIGIAGSVAVGKSTTARILKELLGRWPSSPKVDLVTTDGFLHPNAVLQREKLMQRKGFPESYDTGAILRFLSAIKAGRPDVKAPSYSHLVYDVLPDEYKIVDRPDILIFEGINVLQSRDLPAGGKIVPMVSDFFDFSIYIDAAEDEIHNWYVTRFMRLRETAFRDPNSYFHRYASISDAEALEIAEDLWANINLKNLRQNILPTRPRADLILKKGKDHLIEQVALRKL.

109–116 (GSVAVGKS) is an ATP binding site.

This sequence belongs to the prokaryotic pantothenate kinase family.

The protein resides in the cytoplasm. The enzyme catalyses (R)-pantothenate + ATP = (R)-4'-phosphopantothenate + ADP + H(+). Its pathway is cofactor biosynthesis; coenzyme A biosynthesis; CoA from (R)-pantothenate: step 1/5. The polypeptide is Pantothenate kinase (Rhizobium johnstonii (strain DSM 114642 / LMG 32736 / 3841) (Rhizobium leguminosarum bv. viciae)).